The chain runs to 619 residues: Hypermethylated in cancer 2 protein (619 aa).

A BTB domain is found at 46–109; the sequence is CDVIIMVENS…IYTGKLLPSD (64 aa). Phosphoserine occurs at positions 166, 169, and 197. Disordered regions lie at residues 180–293 and 307–426; these read DVRK…VGNS and MDVE…GHTG. Residues 214-228 are compositionally biased toward gly residues; it reads LGLGGPAGGEMGLGG. The segment at 247 to 249 is binding to CtBP; that stretch reads DLS. The span at 281–293 shows a compositional bias: polar residues; sequence APTSTSALPVGNS. Positions 337–357 are enriched in basic and acidic residues; that stretch reads KKDWNKKEPVAGSPFDRRETG. A phosphoserine mark is found at S349 and S416. 5 consecutive C2H2-type zinc fingers follow at residues 446–468, 509–531, 537–559, 565–587, and 593–615; these read YVCIPCAKGFPSSEQLNAHVETH, FKCSVCEKTYKDPATLRQHEKTH, FPCNICGKMFTQRGTMTRHMRSH, FACDECGMRFTRQYRLTEHMRVH, and YECQLCGGKFTQQRNLISHLRMH.

It belongs to the krueppel C2H2-type zinc-finger protein family. Hic subfamily. As to quaternary structure, self-associates. Interacts with HIC1.

The protein resides in the nucleus. In terms of biological role, transcriptional repressor. This Mus musculus (Mouse) protein is Hypermethylated in cancer 2 protein (Hic2).